A 379-amino-acid chain; its full sequence is UDP-4-amino-4-deoxy-L-arabinose--oxoglutarate aminotransferase (379 aa).

At K182 the chain carries N6-(pyridoxal phosphate)lysine.

Belongs to the DegT/DnrJ/EryC1 family. ArnB subfamily. As to quaternary structure, homodimer. The cofactor is pyridoxal 5'-phosphate.

The enzyme catalyses UDP-4-amino-4-deoxy-beta-L-arabinose + 2-oxoglutarate = UDP-beta-L-threo-pentopyranos-4-ulose + L-glutamate. It participates in nucleotide-sugar biosynthesis; UDP-4-deoxy-4-formamido-beta-L-arabinose biosynthesis; UDP-4-deoxy-4-formamido-beta-L-arabinose from UDP-alpha-D-glucuronate: step 2/3. The protein operates within bacterial outer membrane biogenesis; lipopolysaccharide biosynthesis. In terms of biological role, catalyzes the conversion of UDP-4-keto-arabinose (UDP-Ara4O) to UDP-4-amino-4-deoxy-L-arabinose (UDP-L-Ara4N). The modified arabinose is attached to lipid A and is required for resistance to polymyxin and cationic antimicrobial peptides. The polypeptide is UDP-4-amino-4-deoxy-L-arabinose--oxoglutarate aminotransferase (Salmonella dublin (strain CT_02021853)).